Here is a 210-residue protein sequence, read N- to C-terminus: Calaxin (210 aa).

EF-hand domains follow at residues threonine 64–glycine 99, threonine 100–arginine 135, and glycine 145–leucine 180. Ca(2+)-binding residues include aspartate 77, aspartate 79, aspartate 81, tyrosine 83, glutamate 88, aspartate 113, asparagine 115, aspartate 117, tyrosine 119, glutamate 124, aspartate 158, aspartate 160, aspartate 162, arginine 164, and aspartate 169.

Component of the outer dynein arm-docking complex along with ODAD1, ODAD2, ODAD3 and ODAD4.

It localises to the cytoplasm. It is found in the cytoskeleton. The protein resides in the cilium axoneme. The protein localises to the cell projection. Its subcellular location is the cilium. It localises to the flagellum. In terms of biological role, component of the outer dynein arm-docking complex (ODA-DC) that mediates outer dynein arms (ODA) binding onto the doublet microtubule. Seems to regulate the assembly of both ODAs and their axonemal docking complex onto ciliary microtubules. Regulates ciliary and flagellar motility and is required for cilia-driven determination of body laterality. Its function is as follows. Regulates ciliary motility and is required for cilia-driven determination of body laterality. This Danio rerio (Zebrafish) protein is Calaxin (clxn).